A 158-amino-acid polypeptide reads, in one-letter code: Transcription factor HY5 (158 aa).

Residues 1–25 show a composition bias toward low complexity; sequence MQEQATSSIAASSLPSSSERSSSSA. Residues 1–105 are disordered; that stretch reads MQEQATSSIA…NRVSAQQARE (105 aa). Over residues 26–44 the composition is skewed to basic and acidic residues; that stretch reads LHHELKEGMESDDEIRRVP. The interaction with COP1 stretch occupies residues 35–46; it reads ESDDEIRRVPEM. The segment covering 47 to 58 has biased composition (low complexity); that stretch reads GGEATGTTSASG. Residues 86 to 149 form the bZIP domain; that stretch reads ENKRLKRLLR…QMLRHILKNT (64 aa). The tract at residues 88–108 is basic motif; sequence KRLKRLLRNRVSAQQARERKK. The segment at 114 to 142 is leucine-zipper; it reads LEARVKELETKNAELEERLSTLQNENQML.

Belongs to the bZIP family. As to quaternary structure, interacts with COP1. In terms of processing, ubiquitinated by COP1. Ubiquitination takes place in darkness and leads to its subsequent degradation, thereby preventing to activate photomorphogenesis signals.

It is found in the nucleus. Functionally, transcription factor that promotes photomorphogenesis in the light and positively regulates fruit pigmentation and fruit nutritional quality. Probably acts downstream of the light receptor network and directly affects transcription of light-induced genes. In Solanum lycopersicum (Tomato), this protein is Transcription factor HY5 (HY5).